Here is a 470-residue protein sequence, read N- to C-terminus: Sorting nexin-17 (470 aa).

One can recognise a PX domain in the interval 1–109 (MHFSIPETES…SFLRRAQQET (109 aa)). A 1,2-diacyl-sn-glycero-3-phospho-(1D-myo-inositol-3-phosphate)-binding residues include arginine 36, serine 38, lysine 62, and arginine 75. The region spanning 115–206 (EEVSLEVLLS…YKIVLRKSYW (92 aa)) is the Ras-associating domain. Residues 115–432 (EEVSLEVLLS…DATRESMVKL (318 aa)) are FERM-like. The tract at residues 270–432 (GYLRFDACVA…DATRESMVKL (163 aa)) is PTB-like F3 module. Serine 336, serine 407, serine 409, serine 415, serine 421, serine 437, and serine 440 each carry phosphoserine. The tract at residues 401 to 426 (GGTLRRSDSQQAVKSPPLLESPDATR) is disordered. Residues 458 to 470 (GNFAFEGIGDEDL) form an interacts with the retriever complex region.

The protein belongs to the sorting nexin family. In terms of assembly, monomer. Interacts with APP (via cytoplasmic YXNPXY motif). Interacts with KIF1B. Interacts with the C-termini of P-selectin, PTC, LDLR, VLDLR, LRP1 and LRP8. Interacts with KRIT1 (via N-terminus). Interacts with HRAS. Interacts with ITGB1 and ITGB5 (via NPxY motif). Interacts with CCDC22 and CCDC93; the interaction associates SNX17 with the CCC complex. Interacts (via C-terminus) with VPS26C and VPS35L; the interactions are direct and associate SNX17 with the retriever complex.

The protein localises to the cytoplasm. It is found in the early endosome. It localises to the cytoplasmic vesicle membrane. Functionally, critical regulator of endosomal recycling of numerous surface proteins, including integrins, signaling receptor and channels. Binds to NPxY sequences in the cytoplasmic tails of target cargos. Associates with retriever and CCC complexes to prevent lysosomal degradation and promote cell surface recycling of numerous cargos such as integrins ITGB1, ITGB5 and their associated alpha subunits. Also required for maintenance of normal cell surface levels of APP and LRP1. Interacts with membranes containing phosphatidylinositol 3-phosphate (PtdIns(3P)). In Homo sapiens (Human), this protein is Sorting nexin-17 (SNX17).